We begin with the raw amino-acid sequence, 202 residues long: Keratin-associated protein 5-10 (202 aa).

7 tandem repeats follow at residues 48-51 (CCKP), 54-57 (CCVP), 144-147 (CCKP), 162-165 (CCNP), 172-175 (CCVP), 182-185 (CCKP), and 192-195 (CCVP). A 7 X 4 AA repeats of C-C-X-P region spans residues 48–195 (CCKPVCCCVP…CCCQSSCCVP (148 aa)).

It belongs to the KRTAP type 5 family. In terms of assembly, interacts with hair keratins. Expressed in hair root but not in skin. Expressed also in brain and skeletal muscle.

In terms of biological role, in the hair cortex, hair keratin intermediate filaments are embedded in an interfilamentous matrix, consisting of hair keratin-associated protein (KRTAP), which are essential for the formation of a rigid and resistant hair shaft through their extensive disulfide bond cross-linking with abundant cysteine residues of hair keratins. The matrix proteins include the high-sulfur and high-glycine-tyrosine keratins. The polypeptide is Keratin-associated protein 5-10 (KRTAP5-10) (Homo sapiens (Human)).